We begin with the raw amino-acid sequence, 276 residues long: MHFHFSKMHGLGNDFMVVDCITQNVFFSPELIRRLADRHTGVGFDQLLVVEAPYDPESDFHYRIFNADGSEVEQCGNGARCFARFVRMKGLTNKYTIHVSTKKGKMVLNVEEEDLITVNMGVPEFEPNKIPFRAKQSEKTYILRVGEHTLFCGAVSMGNPHVVTVVDDIRTAAVETLGPLLESHERFPERVNAGFMQVVSRDEINLRVYERGAGETQACGSGACAAVAVGILQGLLDEQVRVHLPGGELEIHWQGPGKPLYMTGPATHIYDGQISC.

Asn-13, Gln-46, and Asn-66 together coordinate substrate. The active-site Proton donor is the Cys-75. Substrate-binding positions include 76–77 (GN), Asn-159, Asn-192, and 210–211 (ER). The Proton acceptor role is filled by Cys-219. Residue 220 to 221 (GS) coordinates substrate.

This sequence belongs to the diaminopimelate epimerase family. As to quaternary structure, homodimer.

It localises to the cytoplasm. The enzyme catalyses (2S,6S)-2,6-diaminopimelate = meso-2,6-diaminopimelate. It participates in amino-acid biosynthesis; L-lysine biosynthesis via DAP pathway; DL-2,6-diaminopimelate from LL-2,6-diaminopimelate: step 1/1. Catalyzes the stereoinversion of LL-2,6-diaminopimelate (L,L-DAP) to meso-diaminopimelate (meso-DAP), a precursor of L-lysine and an essential component of the bacterial peptidoglycan. The chain is Diaminopimelate epimerase from Vibrio cholerae serotype O1 (strain ATCC 39541 / Classical Ogawa 395 / O395).